Consider the following 676-residue polypeptide: Ribosome quality control complex subunit TCF25 (676 aa).

Disordered regions lie at residues 1-59 (MSRR…VRVN) and 85-147 (LTDA…ENGL). The segment covering 123–136 (GKLRKKKKKQKNKK) has biased composition (basic residues). A Phosphoserine modification is found at Ser-602.

This sequence belongs to the TCF25 family. In terms of assembly, component of the ribosome quality control complex (RQC), composed of the E3 ubiquitin ligase LTN1, TCF25 and NEMF associated with the 60S ribosomal subunit. Interacts (via C-terminus) with NFATC4; the interaction leads to suppresson of NFATC4 transcription factor activity and is reduced following stimulation with angiotensin-2. Interacts with XIAP. In terms of tissue distribution, in the embryo, widely expressed with highest levels in brain. In the adult, highest expression is found in the heart. Repressed in cardiac tissue of patients with heart failure (at protein level). mRNA levels in the heart are unchanged in patients with heart failure.

It is found in the nucleus. Its subcellular location is the cytoplasm. The protein resides in the cytosol. Functionally, component of the ribosome quality control complex (RQC), a ribosome-associated complex that mediates ubiquitination and extraction of incompletely synthesized nascent chains for proteasomal degradation. In the RQC complex, required to promote formation of 'Lys-48'-linked polyubiquitin chains during ubiquitination of incompletely synthesized proteins by LTN1. May negatively regulate the calcineurin-NFAT signaling cascade by suppressing the activity of transcription factor NFATC4. May play a role in cell death control. This is Ribosome quality control complex subunit TCF25 from Homo sapiens (Human).